Consider the following 112-residue polypeptide: MAGKTVTRADLAESVFRKVGLSRTESAELVETIIDEICNAITRGEVVKLSSFATFQIREKNERIGRNPKTGEEVPISPRRVMTFKASNVLKQRILKAHTARKAKQKGQKAGV.

It belongs to the bacterial histone-like protein family. In terms of assembly, heterodimer of an alpha and a beta chain.

Its function is as follows. This protein is one of the two subunits of integration host factor, a specific DNA-binding protein that functions in genetic recombination as well as in transcriptional and translational control. The polypeptide is Integration host factor subunit alpha (Agrobacterium fabrum (strain C58 / ATCC 33970) (Agrobacterium tumefaciens (strain C58))).